We begin with the raw amino-acid sequence, 79 residues long: DNYWCPQSGEAFECFESDPNAKFCLNSGKTSVVICSKCRKKYEFCRNGLKVSKRPDYDCGAGWESTPCTGDNSAVPAVF.

Post-translationally, contains four disulfide bonds. As to expression, growth-controlling neurosecretory light green cells, in the cerebral ganglia of the CNS.

It is found in the secreted. Its function is as follows. Anti-gonadotropic neuropeptide. It also decreases the binding capacity of calfluxin to membrane-bound receptors of the albumen gland. This leads to inhibition of the reproductive activities of the infected snail. The sequence is that of Schistosomin from Lymnaea stagnalis (Great pond snail).